Consider the following 295-residue polypeptide: MNLVEWIVTIIMMTEFLLGNCANVFITIVNFIDCVKRRKISSADRIITAIAIFRIGLLWAMLTNWHSHVFTPDTDNLQMRVFGGITWAITNHFTTWLGTILSMFYLFKIANFSNSLFLHLKRKLDNVLLVIFLGSSLFLVAYLGMVNIKKIAWMSIHEGNVTTKSKLKHVTSITNMLLFSLINIVPFGISLNCVLLLIYSLSKHLKNMKFYGKGCQDQSTMVHIKALQTVVSFLLLYATYSSCVIISGWSLQNAPVFLFCVTIGSFYPAGHSCILIWGNQKLKQVFLLLLRQMRC.

Residues 1-5 are Extracellular-facing; it reads MNLVE. A helical transmembrane segment spans residues 6 to 26; that stretch reads WIVTIIMMTEFLLGNCANVFI. Residues 27-45 lie on the Cytoplasmic side of the membrane; the sequence is TIVNFIDCVKRRKISSADR. Residues 46–66 traverse the membrane as a helical segment; the sequence is IITAIAIFRIGLLWAMLTNWH. At 67-80 the chain is on the extracellular side; the sequence is SHVFTPDTDNLQMR. Residues 81-101 form a helical membrane-spanning segment; the sequence is VFGGITWAITNHFTTWLGTIL. Residues 102 to 127 are Cytoplasmic-facing; sequence SMFYLFKIANFSNSLFLHLKRKLDNV. Residues 128–148 traverse the membrane as a helical segment; the sequence is LLVIFLGSSLFLVAYLGMVNI. Topologically, residues 149 to 177 are extracellular; the sequence is KKIAWMSIHEGNVTTKSKLKHVTSITNML. N160 carries an N-linked (GlcNAc...) asparagine glycan. A helical transmembrane segment spans residues 178-198; the sequence is LFSLINIVPFGISLNCVLLLI. At 199–228 the chain is on the cytoplasmic side; that stretch reads YSLSKHLKNMKFYGKGCQDQSTMVHIKALQ. A helical membrane pass occupies residues 229–249; that stretch reads TVVSFLLLYATYSSCVIISGW. The Extracellular portion of the chain corresponds to 250–255; it reads SLQNAP. The chain crosses the membrane as a helical span at residues 256-276; it reads VFLFCVTIGSFYPAGHSCILI. At 277-295 the chain is on the cytoplasmic side; that stretch reads WGNQKLKQVFLLLLRQMRC.

The protein belongs to the G-protein coupled receptor T2R family.

The protein resides in the membrane. In terms of biological role, putative taste receptor which may play a role in the perception of bitterness. In Mus musculus (Mouse), this protein is Taste receptor type 2 member 120.